The chain runs to 164 residues: Photosystem II extrinsic protein V (164 aa).

The N-terminal stretch at 1-27 is a signal peptide; that stretch reads MALKSKFLVGSILATFILNGFSSPAQA. Heme c contacts are provided by Cys-64, Cys-67, His-68, and His-119.

The protein belongs to the cytochrome c family. PsbV subfamily. As to quaternary structure, PSII is composed of 1 copy each of membrane proteins PsbA, PsbB, PsbC, PsbD, PsbE, PsbF, PsbH, PsbI, PsbJ, PsbK, PsbL, PsbM, PsbT, PsbY, PsbZ, Psb30/Ycf12, at least 3 peripheral proteins of the oxygen-evolving complex and a large number of cofactors. It forms dimeric complexes. It depends on heme c as a cofactor.

Its subcellular location is the plastid. The protein resides in the chloroplast thylakoid membrane. Its function is as follows. One of the extrinsic, lumenal subunits of photosystem II (PSII). PSII is a light-driven water plastoquinone oxidoreductase, using light energy to abstract electrons from H(2)O, generating a proton gradient subsequently used for ATP formation. The extrinsic proteins stabilize the structure of photosystem II oxygen-evolving complex (OEC), the ion environment of oxygen evolution and protect the OEC against heat-induced inactivation. The chain is Photosystem II extrinsic protein V from Emiliania huxleyi (Coccolithophore).